We begin with the raw amino-acid sequence, 450 residues long: MNEILNTKDINVIGEFFIETWGCQMNEEDSEKLSGMLKKEGYIRTEERENADVIIFNTCCVRENAELKVYGNLGILKGLKSKNPNLIIAVTGCMMQQKGMAETIKKKFPFVDIIIGTHNLHNFPNYLNEVKKKDTSVLKIQEKENSIIENMPIDRKNSMKAFVTIMYGCNNFCTYCIVPYVRGRERSRTPENIEAEIKKLISEGYKEITLLGQNVNSYGKDLEPNVTFAELLKRVNNIEGLERVRFMTSHPKDLTDDVIEAIAKCDKLCEQIHLPVQSGSSEILKKMNRHYDREKYLDVVSKIKKLIPNVALSTDIIVGFPGETEKDFEETLSLVKEVEYDSAFTFLYSIRKGTPAAKFEDQVPEDVKHKRFNRLVEVLNEISAKKNKAYEGKIEEVLVEGTSKNDENKLMGRTRTGKLVNFIGDKDSIGELVNVKIIKANSFSLTGEEI.

Residues 14-132 form the MTTase N-terminal domain; that stretch reads GEFFIETWGC…FPNYLNEVKK (119 aa). [4Fe-4S] cluster-binding residues include Cys23, Cys59, Cys93, Cys169, Cys173, and Cys176. The region spanning 155 to 385 is the Radical SAM core domain; sequence RKNSMKAFVT…VEVLNEISAK (231 aa). In terms of domain architecture, TRAM spans 388 to 450; the sequence is KAYEGKIEEV…NSFSLTGEEI (63 aa).

It belongs to the methylthiotransferase family. MiaB subfamily. In terms of assembly, monomer. [4Fe-4S] cluster is required as a cofactor.

The protein resides in the cytoplasm. It carries out the reaction N(6)-dimethylallyladenosine(37) in tRNA + (sulfur carrier)-SH + AH2 + 2 S-adenosyl-L-methionine = 2-methylsulfanyl-N(6)-dimethylallyladenosine(37) in tRNA + (sulfur carrier)-H + 5'-deoxyadenosine + L-methionine + A + S-adenosyl-L-homocysteine + 2 H(+). Its function is as follows. Catalyzes the methylthiolation of N6-(dimethylallyl)adenosine (i(6)A), leading to the formation of 2-methylthio-N6-(dimethylallyl)adenosine (ms(2)i(6)A) at position 37 in tRNAs that read codons beginning with uridine. This is tRNA-2-methylthio-N(6)-dimethylallyladenosine synthase from Clostridium botulinum (strain ATCC 19397 / Type A).